A 331-amino-acid chain; its full sequence is L-lactate dehydrogenase A chain (331 aa).

Residues 29–57 and R98 each bind NAD(+); that span reads GMVG…MEDK. Positions 105, 137, and 168 each coordinate substrate. N137 is an NAD(+) binding site. Residue H192 is the Proton acceptor of the active site. T247 contributes to the substrate binding site.

It belongs to the LDH/MDH superfamily. LDH family. As to quaternary structure, homotetramer.

It is found in the cytoplasm. The catalysed reaction is (S)-lactate + NAD(+) = pyruvate + NADH + H(+). It functions in the pathway fermentation; pyruvate fermentation to lactate; (S)-lactate from pyruvate: step 1/1. Interconverts simultaneously and stereospecifically pyruvate and lactate with concomitant interconversion of NADH and NAD(+). This chain is L-lactate dehydrogenase A chain (ldha), found in Parachaenichthys charcoti (Charcot's dragonfish).